The sequence spans 297 residues: D-aminoacyl-tRNA deacylase (297 aa).

This sequence belongs to the DtdA deacylase family. In terms of assembly, monomer. Zn(2+) serves as cofactor.

It carries out the reaction a D-aminoacyl-tRNA + H2O = a tRNA + a D-alpha-amino acid + H(+). The catalysed reaction is glycyl-tRNA(Ala) + H2O = tRNA(Ala) + glycine + H(+). D-aminoacyl-tRNA deacylase with broad substrate specificity. By recycling D-aminoacyl-tRNA to D-amino acids and free tRNA molecules, this enzyme counteracts the toxicity associated with the formation of D-aminoacyl-tRNA entities in vivo. The polypeptide is D-aminoacyl-tRNA deacylase (Methanosarcina mazei (strain ATCC BAA-159 / DSM 3647 / Goe1 / Go1 / JCM 11833 / OCM 88) (Methanosarcina frisia)).